The following is a 170-amino-acid chain: Peptide deformylase (170 aa).

Fe cation-binding residues include cysteine 94 and histidine 136. Residue glutamate 137 is part of the active site. Histidine 140 lines the Fe cation pocket.

Belongs to the polypeptide deformylase family. Fe(2+) serves as cofactor.

It carries out the reaction N-terminal N-formyl-L-methionyl-[peptide] + H2O = N-terminal L-methionyl-[peptide] + formate. Its function is as follows. Removes the formyl group from the N-terminal Met of newly synthesized proteins. Requires at least a dipeptide for an efficient rate of reaction. N-terminal L-methionine is a prerequisite for activity but the enzyme has broad specificity at other positions. In Wolinella succinogenes (strain ATCC 29543 / DSM 1740 / CCUG 13145 / JCM 31913 / LMG 7466 / NCTC 11488 / FDC 602W) (Vibrio succinogenes), this protein is Peptide deformylase.